Reading from the N-terminus, the 374-residue chain is MQSRNELPGSRRVIVKIGSALLTAGGKGLDQPAIGQWVQQIAELRQQGIQVVLVSSGSVAEGMSRLGWKTRPHRLNELQAAASVGQMGLVQTYESLFKRHGLQTAQILLTHDDLSNRERYLNSRSTILTLLELGVIPVINENDTVTTEEIRFGDNDTLGALVANAVEADLLIILTDQAGLFERNPSLDPSAPLVPQAGINDPRLNDMVGDSLSGLGRGGMITKLRAARLAARSGTATVIASGRESGVLPRILDGEELGTLLIPDVSPLIARKRWMAGQLKLKGCFVVDEGAARVLRDAGKSLLPIGVIAVEGEFRRGDLVACTDSAGQEIARGLTNYSAEEARLIMRQPSTRIEEILGYVDEPELIHRDNLVLS.

Lys-16 contacts ATP. Substrate contacts are provided by Ser-56, Asp-143, and Asn-155. Residue 175–176 (TD) participates in ATP binding. The PUA domain maps to 282-360 (KGCFVVDEGA…TRIEEILGYV (79 aa)).

The protein belongs to the glutamate 5-kinase family.

The protein localises to the cytoplasm. The catalysed reaction is L-glutamate + ATP = L-glutamyl 5-phosphate + ADP. It participates in amino-acid biosynthesis; L-proline biosynthesis; L-glutamate 5-semialdehyde from L-glutamate: step 1/2. Functionally, catalyzes the transfer of a phosphate group to glutamate to form L-glutamate 5-phosphate. This is Glutamate 5-kinase from Methylococcus capsulatus (strain ATCC 33009 / NCIMB 11132 / Bath).